The sequence spans 78 residues: UPF0335 protein RP113 (78 aa).

It belongs to the UPF0335 family.

The polypeptide is UPF0335 protein RP113 (Rickettsia prowazekii (strain Madrid E)).